The primary structure comprises 188 residues: Phosphoheptose isomerase (188 aa).

An SIS domain is found at 33-188 (VTASLRAGGK…CGLVEDALCS (156 aa)). Residue 48–50 (NGG) coordinates substrate. 2 residues coordinate Zn(2+): histidine 57 and glutamate 61. Substrate contacts are provided by residues glutamate 61, 90 to 91 (ND), 116 to 118 (STS), serine 121, and glutamine 168. The Zn(2+) site is built by glutamine 168 and histidine 176.

The protein belongs to the SIS family. GmhA subfamily. Homotetramer. The cofactor is Zn(2+).

It is found in the cytoplasm. The enzyme catalyses 2 D-sedoheptulose 7-phosphate = D-glycero-alpha-D-manno-heptose 7-phosphate + D-glycero-beta-D-manno-heptose 7-phosphate. It participates in carbohydrate biosynthesis; D-glycero-D-manno-heptose 7-phosphate biosynthesis; D-glycero-alpha-D-manno-heptose 7-phosphate and D-glycero-beta-D-manno-heptose 7-phosphate from sedoheptulose 7-phosphate: step 1/1. In terms of biological role, catalyzes the isomerization of sedoheptulose 7-phosphate in D-glycero-D-manno-heptose 7-phosphate. The protein is Phosphoheptose isomerase of Rhodospirillum rubrum (strain ATCC 11170 / ATH 1.1.1 / DSM 467 / LMG 4362 / NCIMB 8255 / S1).